A 530-amino-acid polypeptide reads, in one-letter code: BTB/POZ domain-containing protein 3 (530 aa).

Positions 23-48 are disordered; sequence KNRSKKGSKKANSSGGGGGGGSVGSG. The segment covering 36–46 has biased composition (gly residues); it reads SGGGGGGGSVG. The BTB domain occupies 128–198; it reads ADVHFVVGPP…IYCDEIDLAA (71 aa). The BACK domain maps to 243-308; the sequence is FEEPDLTQRC…NWAEVECQRQ (66 aa).

In the somatosensory cortex, specifically expressed in spiny stellate neurons during barrel formation. Also expressed in the olfactory bulb, piriform cortex and hippocampus.

The protein localises to the cytoplasm. It is found in the cytosol. Its subcellular location is the nucleus. Acts as a key regulator of dendritic field orientation during development of sensory cortex. Also directs dendrites toward active axon terminals when ectopically expressed. This is BTB/POZ domain-containing protein 3 (Btbd3) from Mus musculus (Mouse).